Here is a 550-residue protein sequence, read N- to C-terminus: Arginine--tRNA ligase (550 aa).

A 'HIGH' region motif is present at residues 130–140 (ANPTGPIHLGG).

Belongs to the class-I aminoacyl-tRNA synthetase family. As to quaternary structure, monomer.

It localises to the cytoplasm. It catalyses the reaction tRNA(Arg) + L-arginine + ATP = L-arginyl-tRNA(Arg) + AMP + diphosphate. The sequence is that of Arginine--tRNA ligase from Rhodococcus opacus (strain B4).